A 218-amino-acid chain; its full sequence is Chromophore lyase CpcT/CpeT 1 (218 aa).

Belongs to the CpcT/CpeT biliprotein lyase family.

Covalently attaches a chromophore to Cys residue(s) of phycobiliproteins. In Synechococcus sp. (strain JA-3-3Ab) (Cyanobacteria bacterium Yellowstone A-Prime), this protein is Chromophore lyase CpcT/CpeT 1.